A 682-amino-acid polypeptide reads, in one-letter code: E3 ubiquitin ligase Rnf157 (682 aa).

Residue glycine 2 is the site of N-myristoyl glycine attachment. The segment at cysteine 277–arginine 317 adopts an RING-type; degenerate zinc-finger fold. The short motif at arginine 330 to leucine 333 is the D-box 1 element. Disordered regions lie at residues glutamine 440 to aspartate 604 and asparagine 655 to valine 682. The span at glutamate 479–glycine 538 shows a compositional bias: polar residues. Over residues glutamine 585–aspartate 597 the composition is skewed to acidic residues. The D-box 2 motif lies at arginine 658 to leucine 661. Phosphoserine occurs at positions 662, 664, and 665.

As to quaternary structure, interacts with APBB1. Interacts with CHD1; CHD1-binding controls RNF157 stability. Also interacts with ATRN, MEGF8, TECR, MSI2, PLRG1, BYSL, MTERF3, PSMA1, MRPS18B, PRPF4, FASTKD2, SLC25A1, SMU1, CNOT9, MRPS2, MAGT1, FXR2, EMD, PSMD8, HDAC1, RAN, HSD17B12, TXNDC5 and MRPL19. In terms of tissue distribution, predominantly expressed in the brain.

The protein resides in the cytoplasm. It carries out the reaction S-ubiquitinyl-[E2 ubiquitin-conjugating enzyme]-L-cysteine + [acceptor protein]-L-lysine = [E2 ubiquitin-conjugating enzyme]-L-cysteine + N(6)-ubiquitinyl-[acceptor protein]-L-lysine.. Its function is as follows. E3 ubiquitin ligase that ubiquitinates APBB1 for its degradation by the proteasome and thus prevents apoptosis and promotes survival of neurons. Has a dual role in neurons as it is also required for dendrite growth and maintenance for which its ligase activity is not critical. May act as a scaffold molecule to regulate this process. Acts as a downstream effector of the interconnected PI3K and MAPK signaling pathways and thus participates in the regulation of the cell cycle. The polypeptide is E3 ubiquitin ligase Rnf157 (Rnf157) (Rattus norvegicus (Rat)).